The chain runs to 252 residues: ATP synthase subunit a (252 aa).

5 consecutive transmembrane segments (helical) span residues 33–53, 92–112, 130–150, 196–216, and 217–237; these read GQVF…ALAA, VPFV…GALV, DINT…YAGL, LVVG…VMAL, and GLFT…TYIG.

Belongs to the ATPase A chain family. In terms of assembly, F-type ATPases have 2 components, CF(1) - the catalytic core - and CF(0) - the membrane proton channel. CF(1) has five subunits: alpha(3), beta(3), gamma(1), delta(1), epsilon(1). CF(0) has three main subunits: a(1), b(2) and c(9-12). The alpha and beta chains form an alternating ring which encloses part of the gamma chain. CF(1) is attached to CF(0) by a central stalk formed by the gamma and epsilon chains, while a peripheral stalk is formed by the delta and b chains.

The protein localises to the cellular thylakoid membrane. Key component of the proton channel; it plays a direct role in the translocation of protons across the membrane. The chain is ATP synthase subunit a from Synechococcus sp. (strain PCC 6716).